The chain runs to 133 residues: uncharacterized protein (133 aa).

Positions threonine 107–valine 133 are disordered.

This is an uncharacterized protein from Homo sapiens (Human).